The chain runs to 278 residues: Large ribosomal subunit protein uL2 (278 aa).

Residues 201-278 (HGNINDGKAG…IMRSRHQRKK (78 aa)) form a disordered region. Basic residues predominate over residues 210–221 (GRSRWRGKRPHV).

It belongs to the universal ribosomal protein uL2 family. Part of the 50S ribosomal subunit. Forms a bridge to the 30S subunit in the 70S ribosome.

In terms of biological role, one of the primary rRNA binding proteins. Required for association of the 30S and 50S subunits to form the 70S ribosome, for tRNA binding and peptide bond formation. It has been suggested to have peptidyltransferase activity; this is somewhat controversial. Makes several contacts with the 16S rRNA in the 70S ribosome. This chain is Large ribosomal subunit protein uL2, found in Rhizobium meliloti (strain 1021) (Ensifer meliloti).